The primary structure comprises 24 residues: Acetylcholine receptor subunit alpha (24 aa).

This sequence belongs to the ligand-gated ion channel (TC 1.A.9) family. Acetylcholine receptor (TC 1.A.9.1) subfamily. Alpha-1/CHRNA1 sub-subfamily. One of the alpha chains that assemble within the acetylcholine receptor, a pentamer of two alpha chains, a beta, a delta, and a gamma or epsilon chains.

Its subcellular location is the postsynaptic cell membrane. The protein localises to the cell membrane. The enzyme catalyses K(+)(in) = K(+)(out). It catalyses the reaction Na(+)(in) = Na(+)(out). Functionally, upon acetylcholine binding, the AChR responds by an extensive change in conformation that affects all subunits and leads to opening of an ion-conducting channel across the plasma membrane. This chain is Acetylcholine receptor subunit alpha (chrna1), found in Electrophorus electricus (Electric eel).